A 240-amino-acid chain; its full sequence is Aquaporin Z (240 aa).

The next 2 helical transmembrane spans lie at 10–30 and 35–55; these read AIGTFWLTFAGCGSAVIAAGF and IGLVGVSLAFGLSVVTMAYAI. The short motif at 64–66 is the NPA 1 element; it reads NPA. The next 3 membrane-spanning stretches (helical) occupy residues 82-102, 131-151, and 160-180; these read ILPYVIAQVCGAIVAAELLYI, MMACFLTEVVMTMMFLFIIMG, and GFAPLAIGLALVMIHLVSIPV. Residues 186 to 188 carry the NPA 2 motif; it reads NPA. The helical transmembrane segment at 194–214 threads the bilayer; it reads ALFVGGWAMAQLWLFWVAPLI.

Belongs to the MIP/aquaporin (TC 1.A.8) family. In terms of assembly, homotetramer.

It is found in the cell inner membrane. The catalysed reaction is H2O(in) = H2O(out). Functionally, channel that permits osmotically driven movement of water in both directions. It is involved in the osmoregulation and in the maintenance of cell turgor during volume expansion in rapidly growing cells. It mediates rapid entry or exit of water in response to abrupt changes in osmolarity. This is Aquaporin Z from Bradyrhizobium diazoefficiens (strain JCM 10833 / BCRC 13528 / IAM 13628 / NBRC 14792 / USDA 110).